Consider the following 358-residue polypeptide: tRNA(Ile)-lysidine synthase (358 aa).

35-40 (SGGPDS) contributes to the ATP binding site.

Belongs to the tRNA(Ile)-lysidine synthase family.

Its subcellular location is the cytoplasm. It carries out the reaction cytidine(34) in tRNA(Ile2) + L-lysine + ATP = lysidine(34) in tRNA(Ile2) + AMP + diphosphate + H(+). In terms of biological role, ligates lysine onto the cytidine present at position 34 of the AUA codon-specific tRNA(Ile) that contains the anticodon CAU, in an ATP-dependent manner. Cytidine is converted to lysidine, thus changing the amino acid specificity of the tRNA from methionine to isoleucine. The sequence is that of tRNA(Ile)-lysidine synthase from Bradyrhizobium sp. (strain BTAi1 / ATCC BAA-1182).